The following is a 270-amino-acid chain: Phosphatidylglycerol--prolipoprotein diacylglyceryl transferase (270 aa).

Helical transmembrane passes span 18 to 38, 55 to 75, 90 to 110, and 115 to 135; these read ITIY…LWLA, LVLF…VLFE, WQGG…GAVF, and GLSF…GQAI. Arg137 is a binding site for a 1,2-diacyl-sn-glycero-3-phospho-(1'-sn-glycerol). 3 consecutive transmembrane segments (helical) span residues 177–197, 205–225, and 236–256; these read HPTF…LLWL, GELF…IEGM, and LRAA…LWIV.

The protein belongs to the Lgt family.

The protein resides in the cell membrane. It carries out the reaction L-cysteinyl-[prolipoprotein] + a 1,2-diacyl-sn-glycero-3-phospho-(1'-sn-glycerol) = an S-1,2-diacyl-sn-glyceryl-L-cysteinyl-[prolipoprotein] + sn-glycerol 1-phosphate + H(+). It functions in the pathway protein modification; lipoprotein biosynthesis (diacylglyceryl transfer). Catalyzes the transfer of the diacylglyceryl group from phosphatidylglycerol to the sulfhydryl group of the N-terminal cysteine of a prolipoprotein, the first step in the formation of mature lipoproteins. This Geobacillus kaustophilus (strain HTA426) protein is Phosphatidylglycerol--prolipoprotein diacylglyceryl transferase.